The primary structure comprises 230 residues: Ribonuclease 3 (230 aa).

Residues 1–134 form the RNase III domain; it reads MKQLEELLST…FLGALLLDKG (134 aa). Glutamate 47 is a binding site for Mg(2+). The active site involves aspartate 51. Residues aspartate 120 and glutamate 123 each contribute to the Mg(2+) site. The active site involves glutamate 123. The region spanning 160–229 is the DRBM domain; it reads DYKTCLQEFL…AKNALAQLSE (70 aa).

This sequence belongs to the ribonuclease III family. Homodimer. It depends on Mg(2+) as a cofactor.

The protein localises to the cytoplasm. The enzyme catalyses Endonucleolytic cleavage to 5'-phosphomonoester.. In terms of biological role, digests double-stranded RNA. Involved in the processing of primary rRNA transcript to yield the immediate precursors to the large and small rRNAs (23S and 16S). Processes some mRNAs, and tRNAs when they are encoded in the rRNA operon. Processes pre-crRNA and tracrRNA of type II CRISPR loci if present in the organism. This Streptococcus pyogenes serotype M3 (strain SSI-1) protein is Ribonuclease 3.